Reading from the N-terminus, the 594-residue chain is Elongation factor 4 (594 aa).

Positions 2 to 184 constitute a tr-type G domain; that stretch reads KNIRNFSIIA…TIVAKVPAPE (183 aa). GTP-binding positions include 14-19 and 131-134; these read DHGKST and NKID.

It belongs to the TRAFAC class translation factor GTPase superfamily. Classic translation factor GTPase family. LepA subfamily.

It localises to the cell inner membrane. The enzyme catalyses GTP + H2O = GDP + phosphate + H(+). Its function is as follows. Required for accurate and efficient protein synthesis under certain stress conditions. May act as a fidelity factor of the translation reaction, by catalyzing a one-codon backward translocation of tRNAs on improperly translocated ribosomes. Back-translocation proceeds from a post-translocation (POST) complex to a pre-translocation (PRE) complex, thus giving elongation factor G a second chance to translocate the tRNAs correctly. Binds to ribosomes in a GTP-dependent manner. The protein is Elongation factor 4 of Francisella tularensis subsp. tularensis (strain WY96-3418).